The sequence spans 376 residues: Pyrimidine monooxygenase RutA (376 aa).

FMN contacts are provided by residues I61–K62, N127, E136, R152–Y153, and S202.

It belongs to the NtaA/SnaA/DszA monooxygenase family. RutA subfamily.

It catalyses the reaction uracil + FMNH2 + NADH + O2 = (Z)-3-ureidoacrylate + FMN + NAD(+) + H2O + H(+). The catalysed reaction is thymine + FMNH2 + NADH + O2 = (Z)-2-methylureidoacrylate + FMN + NAD(+) + H2O + H(+). Functionally, catalyzes the pyrimidine ring opening between N-3 and C-4 by an unusual flavin hydroperoxide-catalyzed mechanism, adding oxygen atoms in the process to yield ureidoacrylate peracid, that immediately reacts with FMN forming ureidoacrylate and FMN-N(5)-oxide. The FMN-N(5)-oxide reacts spontaneously with NADH to produce FMN. Requires the flavin reductase RutF to regenerate FMN in vivo. The chain is Pyrimidine monooxygenase RutA from Methylorubrum extorquens (strain CM4 / NCIMB 13688) (Methylobacterium extorquens).